A 581-amino-acid chain; its full sequence is Interleukin-22 receptor subunit alpha-1 (581 aa).

Positions 1–15 (MKTLLTILTVGSLAA) are cleaved as a signal peptide. The Extracellular portion of the chain corresponds to 16–230 (HTTVDTSGLL…TLPDRTWAYS (215 aa)). Fibronectin type-III domains are found at residues 18–115 (TVDT…RFSS) and 141–221 (PTLT…RVKT). Cys71 and Cys79 are joined by a disulfide. 2 N-linked (GlcNAc...) asparagine glycosylation sites follow: Asn80 and Asn172. A disulfide bridge connects residues Cys128 and Cys217. Residues 231 to 251 (FSGAVLFSMGFLVGLLCYLGY) form a helical membrane-spanning segment. Over 252-581 (KYITKPPVPP…GLALTVQWES (330 aa)) the chain is Cytoplasmic. The tract at residues 343–364 (QQTLSPPSYAPKAVPEVQPPSY) is disordered. A phosphoserine; by GSK3-beta mark is found at Ser410 and Ser414. Residue Lys449 forms a Glycyl lysine isopeptide (Lys-Gly) (interchain with G-Cter in ubiquitin) linkage.

It belongs to the type II cytokine receptor family. As to quaternary structure, heterodimer with IL10RB and with IL20RB. Phosphorylated by GSK3-BETA and MAPK; phosphorylation by GSK3-BETA stabilizes IL22RA1 by preventing its proteasomal degradation. In terms of tissue distribution, expressed in kidney, liver and lung.

It is found in the cell membrane. Component of the receptor for IL20, IL22 and IL24. Component of IL22 receptor formed by IL22RA1 and IL10RB enabling IL22 signaling via JAK/STAT pathways. IL22 also induces activation of MAPK1/MAPK3 and Akt kinases pathways. Component of one of the receptor for IL20 and IL24 formed by IL22RA1 and IL20RB also signaling through STATs activation. Mediates IL24 antiangiogenic activity as well as IL24 inhibitory effect on endothelial cell tube formation and differentiation. This is Interleukin-22 receptor subunit alpha-1 (Il22ra1) from Mus musculus (Mouse).